We begin with the raw amino-acid sequence, 681 residues long: Minichromosome maintenance domain-containing protein 2 (681 aa).

A Phosphoserine modification is found at S292. The 89-residue stretch at 533 to 621 (KQFTTEDFEK…LIAALLFEIS (89 aa)) folds into the MCM domain.

In terms of biological role, plays an important role in meiotic recombination and associated DNA double-strand break repair. The polypeptide is Minichromosome maintenance domain-containing protein 2 (Mcmdc2) (Rattus norvegicus (Rat)).